We begin with the raw amino-acid sequence, 258 residues long: Probable enoyl-CoA hydratase (258 aa).

Belongs to the enoyl-CoA hydratase/isomerase family.

It catalyses the reaction a (3S)-3-hydroxyacyl-CoA = a (2E)-enoyl-CoA + H2O. The catalysed reaction is a 4-saturated-(3S)-3-hydroxyacyl-CoA = a (3E)-enoyl-CoA + H2O. Its pathway is lipid metabolism; fatty acid beta-oxidation. Functionally, involved in the degradation of long-chain fatty acids. In Bacillus subtilis (strain 168), this protein is Probable enoyl-CoA hydratase (fadB).